A 345-amino-acid polypeptide reads, in one-letter code: Uroporphyrinogen decarboxylase (345 aa).

Residues 27–31 (RQAGR), Asp-77, Tyr-152, Ser-207, and His-323 each bind substrate.

This sequence belongs to the uroporphyrinogen decarboxylase family. In terms of assembly, homodimer.

The protein resides in the cytoplasm. It catalyses the reaction uroporphyrinogen III + 4 H(+) = coproporphyrinogen III + 4 CO2. It functions in the pathway porphyrin-containing compound metabolism; protoporphyrin-IX biosynthesis; coproporphyrinogen-III from 5-aminolevulinate: step 4/4. Its function is as follows. Catalyzes the decarboxylation of four acetate groups of uroporphyrinogen-III to yield coproporphyrinogen-III. In Maricaulis maris (strain MCS10) (Caulobacter maris), this protein is Uroporphyrinogen decarboxylase.